Consider the following 186-residue polypeptide: Probable nicotinate-nucleotide adenylyltransferase (186 aa).

This sequence belongs to the NadD family.

It carries out the reaction nicotinate beta-D-ribonucleotide + ATP + H(+) = deamido-NAD(+) + diphosphate. It functions in the pathway cofactor biosynthesis; NAD(+) biosynthesis; deamido-NAD(+) from nicotinate D-ribonucleotide: step 1/1. Catalyzes the reversible adenylation of nicotinate mononucleotide (NaMN) to nicotinic acid adenine dinucleotide (NaAD). This Tropheryma whipplei (strain TW08/27) (Whipple's bacillus) protein is Probable nicotinate-nucleotide adenylyltransferase.